A 282-amino-acid polypeptide reads, in one-letter code: Pantothenate synthetase (282 aa).

Residue 30 to 37 coordinates ATP; sequence MGFLHDGH. The Proton donor role is filled by His37. Gln60 contributes to the (R)-pantoate binding site. Beta-alanine is bound at residue Gln60. Residue 146 to 149 coordinates ATP; sequence GQKD. A (R)-pantoate-binding site is contributed by Gln152. Residues Ile175 and 183–186 each bind ATP; that span reads KSSR.

This sequence belongs to the pantothenate synthetase family. Homodimer.

It localises to the cytoplasm. It carries out the reaction (R)-pantoate + beta-alanine + ATP = (R)-pantothenate + AMP + diphosphate + H(+). It participates in cofactor biosynthesis; (R)-pantothenate biosynthesis; (R)-pantothenate from (R)-pantoate and beta-alanine: step 1/1. Catalyzes the condensation of pantoate with beta-alanine in an ATP-dependent reaction via a pantoyl-adenylate intermediate. This Campylobacter jejuni subsp. jejuni serotype O:6 (strain 81116 / NCTC 11828) protein is Pantothenate synthetase.